A 110-amino-acid polypeptide reads, in one-letter code: Large ribosomal subunit protein uL22 (110 aa).

Belongs to the universal ribosomal protein uL22 family. Part of the 50S ribosomal subunit.

This protein binds specifically to 23S rRNA; its binding is stimulated by other ribosomal proteins, e.g. L4, L17, and L20. It is important during the early stages of 50S assembly. It makes multiple contacts with different domains of the 23S rRNA in the assembled 50S subunit and ribosome. Functionally, the globular domain of the protein is located near the polypeptide exit tunnel on the outside of the subunit, while an extended beta-hairpin is found that lines the wall of the exit tunnel in the center of the 70S ribosome. This is Large ribosomal subunit protein uL22 from Shewanella baltica (strain OS223).